A 98-amino-acid chain; its full sequence is NADH-ubiquinone oxidoreductase chain 4L (98 aa).

The next 3 helical transmembrane spans lie at 2-22 (PSIS…MLMF), 29-49 (SLLC…LIIL), and 61-81 (ILLL…LVMV).

This sequence belongs to the complex I subunit 4L family. In terms of assembly, core subunit of respiratory chain NADH dehydrogenase (Complex I) which is composed of 45 different subunits.

It is found in the mitochondrion inner membrane. It carries out the reaction a ubiquinone + NADH + 5 H(+)(in) = a ubiquinol + NAD(+) + 4 H(+)(out). In terms of biological role, core subunit of the mitochondrial membrane respiratory chain NADH dehydrogenase (Complex I) which catalyzes electron transfer from NADH through the respiratory chain, using ubiquinone as an electron acceptor. Part of the enzyme membrane arm which is embedded in the lipid bilayer and involved in proton translocation. The sequence is that of NADH-ubiquinone oxidoreductase chain 4L (MT-ND4L) from Microcebus griseorufus (Gray-brown mouse lemur).